Consider the following 193-residue polypeptide: Putative histone H2B type 2-C (193 aa).

A compositionally biased stretch (low complexity) spans 1–12; the sequence is MPEPAKFAPAPK. Residues 1 to 33 form a disordered region; that stretch reads MPEPAKFAPAPKKGSKKAVTKAQKKDGKKRKRS. Residue P2 is modified to N-acetylproline. K6 carries the post-translational modification N6-(2-hydroxyisobutyryl)lysine; alternate. 2 positions are modified to N6-(beta-hydroxybutyryl)lysine; alternate: K6 and K12. 3 positions are modified to N6-acetyllysine; alternate: K6, K12, and K13. K6 carries the post-translational modification N6-butyryllysine; alternate. N6-crotonyllysine; alternate is present on residues K6, K12, and K13. N6-lactoyllysine; alternate is present on residues K6 and K12. Residue K6 forms a Glycyl lysine isopeptide (Lys-Gly) (interchain with G-Cter in SUMO2); alternate linkage. Residue K13 is modified to N6-(2-hydroxyisobutyryl)lysine; alternate. A Phosphoserine; by STK4/MST1 modification is found at S15. An N6-acetyllysine; alternate mark is found at K16, K17, K21, and K24. N6-crotonyllysine; alternate is present on residues K16, K17, K21, and K24. N6-lactoyllysine; alternate is present on residues K16, K17, K21, and K24. An N6-(beta-hydroxybutyryl)lysine; alternate mark is found at K17 and K21. K17 carries the post-translational modification N6-glutaryllysine; alternate. N6-(2-hydroxyisobutyryl)lysine; alternate is present on residues K21 and K24. K21 carries the N6-butyryllysine; alternate modification. A Glycyl lysine isopeptide (Lys-Gly) (interchain with G-Cter in SUMO2); alternate cross-link involves residue K21. K25 is subject to N6-(2-hydroxyisobutyryl)lysine. Position 35 is an N6-(2-hydroxyisobutyryl)lysine; alternate (K35). K35 is subject to N6-(beta-hydroxybutyryl)lysine; alternate. K35 is subject to N6-crotonyllysine; alternate. Residue K35 is modified to N6-glutaryllysine; alternate. N6-succinyllysine; alternate is present on K35. A Glycyl lysine isopeptide (Lys-Gly) (interchain with G-Cter in ubiquitin); alternate cross-link involves residue K35. S37 carries the phosphoserine; by AMPK modification. An N6-(2-hydroxyisobutyryl)lysine; alternate mark is found at K44, K47, and K58. N6-lactoyllysine; alternate is present on K44. An N6-glutaryllysine; alternate mark is found at K44 and K47. Residue K47 is modified to N6-methyllysine; alternate. The residue at position 58 (K58) is an N6,N6-dimethyllysine; alternate. R80 carries the dimethylated arginine modification. K86 carries the post-translational modification N6-(2-hydroxyisobutyryl)lysine; alternate. The residue at position 86 (K86) is an N6-(beta-hydroxybutyryl)lysine; alternate. K86 is modified (N6-acetyllysine; alternate). N6-lactoyllysine; alternate is present on K86. K86 carries the N6,N6,N6-trimethyllysine; alternate modification. Omega-N-methylarginine is present on residues R87 and R93. The interval 111–136 is disordered; that stretch reads PCPRAPRRSPSTPAPSESLPGPGARS.

It belongs to the histone H2B family. In terms of assembly, the nucleosome is a histone octamer containing two molecules each of H2A, H2B, H3 and H4 assembled in one H3-H4 heterotetramer and two H2A-H2B heterodimers. The octamer wraps approximately 147 bp of DNA. In terms of processing, phosphorylation at Ser-37 (H2BS36ph) by AMPK in response to stress promotes transcription. Phosphorylated on Ser-15 (H2BS14ph) by STK4/MST1 during apoptosis; which facilitates apoptotic chromatin condensation. Also phosphorylated on Ser-15 in response to DNA double strand breaks (DSBs), and in correlation with somatic hypermutation and immunoglobulin class-switch recombination. Post-translationally, crotonylation (Kcr) is specifically present in male germ cells and marks testis-specific genes in post-meiotic cells, including X-linked genes that escape sex chromosome inactivation in haploid cells. Crotonylation marks active promoters and enhancers and confers resistance to transcriptional repressors. It is also associated with post-meiotically activated genes on autosomes. Lactylated in macrophages by EP300/P300 by using lactoyl-CoA directly derived from endogenous or exogenous lactate, leading to stimulates gene transcription.

It localises to the nucleus. It is found in the chromosome. Functionally, core component of nucleosome. Nucleosomes wrap and compact DNA into chromatin, limiting DNA accessibility to the cellular machineries which require DNA as a template. Histones thereby play a central role in transcription regulation, DNA repair, DNA replication and chromosomal stability. DNA accessibility is regulated via a complex set of post-translational modifications of histones, also called histone code, and nucleosome remodeling. This Homo sapiens (Human) protein is Putative histone H2B type 2-C.